The following is a 786-amino-acid chain: Mitochondrial intermediate peptidase (786 aa).

A mitochondrion-targeting transit peptide spans 1 to 29 (MSSILLRSYRHHAKVWTRPSSKSSFIRSL). His-567 serves as a coordination point for Zn(2+). Glu-568 is a catalytic residue. Zn(2+)-binding residues include His-571 and His-574.

This sequence belongs to the peptidase M3 family. Requires Zn(2+) as cofactor.

Its subcellular location is the mitochondrion matrix. The enzyme catalyses Release of an N-terminal octapeptide as second stage of processing of some proteins imported into the mitochondrion.. Functionally, cleaves proteins, imported into the mitochondrion, to their mature size. While most mitochondrial precursor proteins are processed to the mature form in one step by mitochondrial processing peptidase (MPP), the sequential cleavage by MIP of an octapeptide after initial processing by MPP is a required step for a subgroup of nuclear-encoded precursor proteins destined for the matrix or the inner membrane. This chain is Mitochondrial intermediate peptidase (OCT1), found in Meyerozyma guilliermondii (strain ATCC 6260 / CBS 566 / DSM 6381 / JCM 1539 / NBRC 10279 / NRRL Y-324) (Yeast).